A 416-amino-acid polypeptide reads, in one-letter code: Vacuole membrane protein KMS2 (416 aa).

Position 2 is an N-acetylglycine (Gly-2). The Cytoplasmic portion of the chain corresponds to 2 to 59 (GYGNRASSKTPAISGLREKHQQDLEKLTLTSQPFKTLRLFVVAVFLYVRRWSSYLLAN). Residues 60-80 (VGWLILFCSIFVAFAALLVTL) traverse the membrane as a helical segment. Topologically, residues 81-100 (DGPHVKHVEELSEYTRFGLW) are lumenal. A helical transmembrane segment spans residues 101 to 123 (WIFLGVASSIGLGSGLHTFVLYL). Residues 124-249 (GPHIALFTIK…WLLSHSQYLN (126 aa)) lie on the Cytoplasmic side of the membrane. A helical membrane pass occupies residues 250 to 270 (FFTILILASVPNPLFDLAGIM). Topologically, residues 271–281 (CGQFEKPFWEF) are lumenal. Residues 282 to 304 (FLATLIGKAIIKTHIQTVFIICV) traverse the membrane as a helical segment. The Cytoplasmic segment spans residues 305-315 (CNNQLLDWVEN). Residues 316–336 (ELIYILSFVPGFASALPELTA) traverse the membrane as a helical segment. The Lumenal segment spans residues 337–364 (KLRLMKEKYLIASPPVSSDINVKKWDLS). The chain crosses the membrane as a helical span at residues 365–385 (FASVWNGVVWLMLLNFFGQIV). Residues 386-416 (TSTAQRYLKKQQEEELDALTNKSSLTSKKSK) are Cytoplasmic-facing.

It belongs to the VMP1 family.

Its subcellular location is the endoplasmic reticulum membrane. Functionally, involved in the early secretory pathway. Required for the correct export of secretory products from the endoplasmic reticulum (ER) and involved in the maintenance of ER integrity. This is Vacuole membrane protein KMS2 from Arabidopsis thaliana (Mouse-ear cress).